We begin with the raw amino-acid sequence, 273 residues long: 4-hydroxy-tetrahydrodipicolinate reductase (273 aa).

NAD(+)-binding positions include 12 to 17 and Glu38; that span reads GAGGRM. Arg39 serves as a coordination point for NADP(+). Residues 102 to 104 and 126 to 129 contribute to the NAD(+) site; these read GTT and AANF. His159 (proton donor/acceptor) is an active-site residue. His160 is a binding site for (S)-2,3,4,5-tetrahydrodipicolinate. The active-site Proton donor is the Lys163. 169-170 is a binding site for (S)-2,3,4,5-tetrahydrodipicolinate; sequence GT.

The protein belongs to the DapB family. Homotetramer.

It localises to the cytoplasm. It carries out the reaction (S)-2,3,4,5-tetrahydrodipicolinate + NAD(+) + H2O = (2S,4S)-4-hydroxy-2,3,4,5-tetrahydrodipicolinate + NADH + H(+). The enzyme catalyses (S)-2,3,4,5-tetrahydrodipicolinate + NADP(+) + H2O = (2S,4S)-4-hydroxy-2,3,4,5-tetrahydrodipicolinate + NADPH + H(+). It functions in the pathway amino-acid biosynthesis; L-lysine biosynthesis via DAP pathway; (S)-tetrahydrodipicolinate from L-aspartate: step 4/4. In terms of biological role, catalyzes the conversion of 4-hydroxy-tetrahydrodipicolinate (HTPA) to tetrahydrodipicolinate. In Salmonella agona (strain SL483), this protein is 4-hydroxy-tetrahydrodipicolinate reductase.